The primary structure comprises 388 residues: Flap endonuclease 1 (388 aa).

Residues 1–104 are N-domain; sequence MGILGLSKLI…GELAKRAERR (104 aa). D34 lines the Mg(2+) pocket. Residues R47 and R70 each contribute to the DNA site. D86, E158, E160, D179, and D181 together coordinate Mg(2+). The I-domain stretch occupies residues 122 to 253; the sequence is EIEKFNRRLV…KRAIELINSY (132 aa). Residue E158 participates in DNA binding. Positions 231 and 233 each coordinate DNA. D233 is a binding site for Mg(2+). The interval 336-344 is interaction with PCNA; that stretch reads TQVRLDSFF. Residues 355 to 388 form a disordered region; it reads AAAKRKAEEAKKSANNKKAKIGGGGGAGRGRRPK.

The protein belongs to the XPG/RAD2 endonuclease family. FEN1 subfamily. As to quaternary structure, interacts with PCNA. Three molecules of FEN1 bind to one PCNA trimer with each molecule binding to one PCNA monomer. PCNA stimulates the nuclease activity without altering cleavage specificity. Requires Mg(2+) as cofactor. Phosphorylated. Phosphorylation upon DNA damage induces relocalization to the nuclear plasma.

It is found in the nucleus. The protein localises to the nucleolus. Its subcellular location is the nucleoplasm. It localises to the mitochondrion. Its function is as follows. Structure-specific nuclease with 5'-flap endonuclease and 5'-3' exonuclease activities involved in DNA replication and repair. During DNA replication, cleaves the 5'-overhanging flap structure that is generated by displacement synthesis when DNA polymerase encounters the 5'-end of a downstream Okazaki fragment. It enters the flap from the 5'-end and then tracks to cleave the flap base, leaving a nick for ligation. Also involved in the long patch base excision repair (LP-BER) pathway, by cleaving within the apurinic/apyrimidinic (AP) site-terminated flap. Acts as a genome stabilization factor that prevents flaps from equilibrating into structures that lead to duplications and deletions. Also possesses 5'-3' exonuclease activity on nicked or gapped double-stranded DNA, and exhibits RNase H activity. Also involved in replication and repair of rDNA and in repairing mitochondrial DNA. This is Flap endonuclease 1 from Drosophila willistoni (Fruit fly).